The following is a 355-amino-acid chain: uncharacterized protein (355 aa).

The disordered stretch occupies residues M1 to K61. Residues Y18–S37 are compositionally biased toward polar residues.

This is an uncharacterized protein from Acanthamoeba polyphaga mimivirus (APMV).